The chain runs to 237 residues: Ribonuclease PH (237 aa).

Phosphate is bound by residues Arg-86 and 124–126 (GTR).

Belongs to the RNase PH family. In terms of assembly, homohexameric ring arranged as a trimer of dimers.

It catalyses the reaction tRNA(n+1) + phosphate = tRNA(n) + a ribonucleoside 5'-diphosphate. Functionally, phosphorolytic 3'-5' exoribonuclease that plays an important role in tRNA 3'-end maturation. Removes nucleotide residues following the 3'-CCA terminus of tRNAs; can also add nucleotides to the ends of RNA molecules by using nucleoside diphosphates as substrates, but this may not be physiologically important. Probably plays a role in initiation of 16S rRNA degradation (leading to ribosome degradation) during starvation. The sequence is that of Ribonuclease PH from Shewanella woodyi (strain ATCC 51908 / MS32).